The sequence spans 482 residues: Replication factor C large subunit (482 aa).

Position 46-53 (Gly46–Thr53) interacts with ATP. The segment at Glu420–Phe482 is disordered. Basic and acidic residues predominate over residues Lys442–Ala476.

The protein belongs to the activator 1 small subunits family. RfcL subfamily. In terms of assembly, heteromultimer composed of small subunits (RfcS) and large subunits (RfcL).

Part of the RFC clamp loader complex which loads the PCNA sliding clamp onto DNA. The polypeptide is Replication factor C large subunit (Methanococcus maripaludis (strain C7 / ATCC BAA-1331)).